The sequence spans 330 residues: ADP-L-glycero-D-manno-heptose-6-epimerase (330 aa).

Residues 11–12 (FI), 32–33 (DD), Gln39, Gln54, 75–79 (QGACA), and Asn92 contribute to the NADP(+) site. Tyr139 functions as the Proton acceptor in the catalytic mechanism. NADP(+) is bound at residue Lys143. Asn168 provides a ligand contact to substrate. 2 residues coordinate NADP(+): Val169 and Lys177. Lys177 acts as the Proton acceptor in catalysis. Residues Arg179, His186, 200–203 (FGEH), Arg213, and Tyr292 contribute to the substrate site.

Belongs to the NAD(P)-dependent epimerase/dehydratase family. HldD subfamily. As to quaternary structure, homopentamer. The cofactor is NADP(+).

It carries out the reaction ADP-D-glycero-beta-D-manno-heptose = ADP-L-glycero-beta-D-manno-heptose. It participates in nucleotide-sugar biosynthesis; ADP-L-glycero-beta-D-manno-heptose biosynthesis; ADP-L-glycero-beta-D-manno-heptose from D-glycero-beta-D-manno-heptose 7-phosphate: step 4/4. Catalyzes the interconversion between ADP-D-glycero-beta-D-manno-heptose and ADP-L-glycero-beta-D-manno-heptose via an epimerization at carbon 6 of the heptose. The chain is ADP-L-glycero-D-manno-heptose-6-epimerase from Pseudomonas aeruginosa (strain UCBPP-PA14).